The primary structure comprises 798 residues: Protocadherin beta-2 (798 aa).

An N-terminal signal peptide occupies residues 1–30 (MEAGEGKERVPKQRQVLIFFVLLGIAQASC). Residues 31 to 692 (QPRHYSVAEE…AQADLLTVYL (662 aa)) lie on the Extracellular side of the membrane. Cadherin domains lie at 37 to 135 (VAEE…SPVF), 136 to 244 (LDKE…VPEF), 249 to 349 (YEVQ…PPEL), 354 to 453 (LINQ…APAF), and 458 to 563 (YTLF…SPFV). N-linked (GlcNAc...) asparagine glycosylation occurs at Asn171. Lys299 bears the N6-acetyllysine mark. 2 N-linked (GlcNAc...) asparagine glycosylation sites follow: Asn420 and Asn438. A glycan (N-linked (GlcNAc...) asparagine) is linked at Asn569. A Cadherin 6 domain is found at 570 to 673 (GSAPCTELVP…LVDGFSQPYL (104 aa)). Residues 693–713 (VVALASVSSLFLFSVLLFVAV) traverse the membrane as a helical segment. The Cytoplasmic segment spans residues 714–798 (RLCRRSRAAS…PSFRKSFEFT (85 aa)).

The protein resides in the cell membrane. Potential calcium-dependent cell-adhesion protein. May be involved in the establishment and maintenance of specific neuronal connections in the brain. In Homo sapiens (Human), this protein is Protocadherin beta-2 (PCDHB2).